The primary structure comprises 163 residues: Nitrogen regulatory protein (163 aa).

The region spanning 12–156 is the PTS EIIA type-2 domain; the sequence is SVLNRECTRS…EELYQIITDT (145 aa). The active-site Tele-phosphohistidine intermediate is the H73.

It localises to the cytoplasm. Its function is as follows. Seems to have a role in regulating nitrogen assimilation. The protein is Nitrogen regulatory protein (ptsN) of Escherichia coli (strain K12).